Reading from the N-terminus, the 448-residue chain is Trigger factor (448 aa).

The PPIase FKBP-type domain maps to 172–257 (GDRVTVDFVG…MKKIEWPHLP (86 aa)).

The protein belongs to the FKBP-type PPIase family. Tig subfamily.

The protein resides in the cytoplasm. The catalysed reaction is [protein]-peptidylproline (omega=180) = [protein]-peptidylproline (omega=0). In terms of biological role, involved in protein export. Acts as a chaperone by maintaining the newly synthesized protein in an open conformation. Functions as a peptidyl-prolyl cis-trans isomerase. The protein is Trigger factor of Burkholderia ambifaria (strain ATCC BAA-244 / DSM 16087 / CCUG 44356 / LMG 19182 / AMMD) (Burkholderia cepacia (strain AMMD)).